Consider the following 475-residue polypeptide: 3-isopropylmalate dehydratase large subunit (475 aa).

[4Fe-4S] cluster-binding residues include cysteine 352, cysteine 413, and cysteine 416.

It belongs to the aconitase/IPM isomerase family. LeuC type 1 subfamily. Heterodimer of LeuC and LeuD. [4Fe-4S] cluster is required as a cofactor.

It carries out the reaction (2R,3S)-3-isopropylmalate = (2S)-2-isopropylmalate. It functions in the pathway amino-acid biosynthesis; L-leucine biosynthesis; L-leucine from 3-methyl-2-oxobutanoate: step 2/4. In terms of biological role, catalyzes the isomerization between 2-isopropylmalate and 3-isopropylmalate, via the formation of 2-isopropylmaleate. The sequence is that of 3-isopropylmalate dehydratase large subunit from Pseudomonas syringae pv. tomato (strain ATCC BAA-871 / DC3000).